The primary structure comprises 61 residues: Myrmicitoxin(1)-Pm5a (61 aa).

An N-terminal signal peptide occupies residues 1 to 23 (MKAIIFLFAVLTVVAIIIPIISG). The propeptide occupies 24 to 33 (EPNAGPLAAS). Position 60 is a glutamine amide (Q60).

Belongs to the formicidae venom clade 2 family. In terms of tissue distribution, expressed by the venom gland.

Its subcellular location is the secreted. Functionally, toxin that causes a rapid and irreversible paralysis when intrathoracically injected into insects (blowflies). Does not cause spontaneous nocifensive behaviors by intraplantar injection in mice. In Pogonomyrmex maricopa (Maricopa harvester ant), this protein is Myrmicitoxin(1)-Pm5a.